Here is a 437-residue protein sequence, read N- to C-terminus: Phosphomethylpyrimidine synthase (437 aa).

Residues N69, M98, Y127, H163, 185–187, 226–229, and E265 each bind substrate; these read SRG and DACR. H269 provides a ligand contact to Zn(2+). Substrate is bound at residue Y292. H333 is a binding site for Zn(2+). Residues C409, C412, and C416 each coordinate [4Fe-4S] cluster.

Belongs to the ThiC family. [4Fe-4S] cluster serves as cofactor.

It carries out the reaction 5-amino-1-(5-phospho-beta-D-ribosyl)imidazole + S-adenosyl-L-methionine = 4-amino-2-methyl-5-(phosphooxymethyl)pyrimidine + CO + 5'-deoxyadenosine + formate + L-methionine + 3 H(+). It participates in cofactor biosynthesis; thiamine diphosphate biosynthesis. Catalyzes the synthesis of the hydroxymethylpyrimidine phosphate (HMP-P) moiety of thiamine from aminoimidazole ribotide (AIR) in a radical S-adenosyl-L-methionine (SAM)-dependent reaction. This is Phosphomethylpyrimidine synthase from Clostridium kluyveri (strain NBRC 12016).